The primary structure comprises 634 residues: Heat shock 70-related protein 1, mitochondrial (634 aa).

The transit peptide at 1 to 20 directs the protein to the mitochondrion; it reads MFARRVCGSAAASAACLARH. Residues 538–614 are a coiled coil; that stretch reads SEQHAEADRV…AAATDKLQKA (77 aa).

Belongs to the heat shock protein 70 family.

The protein localises to the mitochondrion. This chain is Heat shock 70-related protein 1, mitochondrial (HSP70.1), found in Leishmania major.